An 801-amino-acid chain; its full sequence is Disks large homolog 4 (801 aa).

In terms of domain architecture, L27 spans 4-60; that stretch reads KREDTERALQAMEACQSAGDEGFRTRAERLLTIFQSDLFQALLDIQEFYELTVFENQ. 2 consecutive PDZ domains span residues 153-240 and 248-335; these read EITL…LRHK and ELKL…AKTL. The segment at 339-373 is disordered; sequence HHQDAYNPPDITSSYSPHMDMSDYPQALSPSSPRR. A PDZ 3 domain is found at 393-474; it reads RVVIHRGSTG…TVTIITQYRP (82 aa). Residues 507 to 577 enclose the SH3 domain; the sequence is KRSFFIRALF…PSKRRVERKE (71 aa). One can recognise a Guanylate kinase-like domain in the interval 610–786; sequence ARPVIILGPS…IYHHVKSVIE (177 aa).

This sequence belongs to the MAGUK family. Ubiquitinated by MDM2 in response to NMDA receptor activation, leading to proteasome-mediated degradation of DLG4 which is required for AMPA receptor endocytosis. Post-translationally, palmitoylated. Palmitoylation is required for targeting to postsynaptic density, plasma membrane and synapses.

The protein localises to the cell membrane. The protein resides in the postsynaptic density. Its subcellular location is the synapse. Functionally, postsynaptic scaffolding protein that plays a critical role in synaptogenesis and synaptic plasticity by providing a platform for the postsynaptic clustering of crucial synaptic proteins. This is Disks large homolog 4 (dlg4) from Danio rerio (Zebrafish).